Reading from the N-terminus, the 749-residue chain is Patatin-like phospholipase domain-containing protein An01g04180 (749 aa).

Positions 1–21 are disordered; it reads MNGAEKSAAGDTYDPSTIPDY. Residues 87 to 107 form a helical membrane-spanning segment; that stretch reads WPFLFTVFGWITALAFAYTLT. Positions 277–468 constitute a PNPLA domain; sequence LCLSGGATFA…RTDIPIKALN (192 aa). Positions 308–312 match the GXSXG motif; that stretch reads GTSGG. The active-site Nucleophile is the Ser-310. Asp-455 acts as the Proton acceptor in catalysis. The segment at 619 to 726 is disordered; that stretch reads AGGRPISPAP…STGSSIFEEV (108 aa). The segment covering 649–664 has biased composition (basic and acidic residues); the sequence is PLNERLDHNLPERRGD. Low complexity predominate over residues 685 to 707; the sequence is SLSENSSNESAARPSSSSSSSRL.

The protein belongs to the PLPL family.

It localises to the membrane. Its function is as follows. Probable lipid hydrolase. The polypeptide is Patatin-like phospholipase domain-containing protein An01g04180 (Aspergillus niger (strain ATCC MYA-4892 / CBS 513.88 / FGSC A1513)).